Here is a 50-residue protein sequence, read N- to C-terminus: uncharacterized protein (50 aa).

This is an uncharacterized protein from Rickettsia prowazekii (strain Madrid E).